Here is a 709-residue protein sequence, read N- to C-terminus: MSSSDPKPGPKPGPWPPTPESAAMPPSSWAKKTGFRPKFSGETTATDSSSGQLSLPVRAKQQETQPDLEAGQTRLRPPPPVSAAVTNGETDKDKKEKPPPPPPGSVAVPVKDQPVKRRRDSDGVVGRSNGPDGANGSGDPVRRPGRIEETVEVLPQSMDDDLVARNLHMKYGLRDTPGLVPIGFYGLQHYLSMLGSLILVPLVIVPAMGGSHEEVANVVSTVLFVSGITTLLHTSFGSRLPLIQGPSFVFLAPALAIINSPEFQGLNGNNNFKHIMRELQGAIIIGSAFQAVLGYSGLMSLILRLVNPVVVAPTVAAVGLSFYSYGFPLVGKCLEIGVVQILLVIIFALYLRKISVLSHRIFLIYAVPLSLAITWAAAFLLTETGAYTYKGCDPNVPVSNVVSTHCRKYMTRMKYCRVDTSHALSSAPWFRFPYPLQWGVPLFNWKMAFVMCVVSVIASVDSVGSYHASSLLVASRPPTRGVVSRAIGLEGFTSVLAGLWGTGTGSTTLTENVHTIAVTKMGSRRVVELGACVLVIFSLVGKVGGFLASIPQVMVASLLCFMWAMFTALGLSNLRYSEAGSSRNIIIVGLSLFFSLSVPAYFQQYGISPNSNLSVPSYYQPYIVSSHGPFKSQYKGMNYVMNTLLSMSMVIAFIMAVILDNTVPGSKQERGVYVWSDSETATREPALAKDYELPFRVGRFFRWVKWVGI.

The tract at residues 1-145 (MSSSDPKPGP…GSGDPVRRPG (145 aa)) is disordered. The span at 7-19 (KPGPKPGPWPPTP) shows a compositional bias: pro residues. The residue at position 40 (Ser40) is a Phosphoserine. Residues 41–53 (GETTATDSSSGQL) show a composition bias toward polar residues. Basic and acidic residues-rich tracts occupy residues 89–98 (ETDKDKKEKP) and 113–122 (QPVKRRRDSD). Transmembrane regions (helical) follow at residues 190-210 (YLSM…AMGG), 218-238 (VVST…SFGS), 240-260 (LPLI…IINS), 283-303 (IIIG…SLIL), 308-328 (PVVV…YGFP), 329-349 (LVGK…IFAL), 361-381 (IFLI…AFLL), 438-458 (WGVP…SVIA), 530-550 (GACV…LASI), 551-571 (PQVM…ALGL), 585-605 (IIIV…FQQY), and 639-659 (YVMN…AVIL).

Belongs to the nucleobase:cation symporter-2 (NCS2) (TC 2.A.40) family. As to expression, ubiquitous.

It is found in the cell membrane. This Arabidopsis thaliana (Mouse-ear cress) protein is Nucleobase-ascorbate transporter 12 (NAT12).